A 214-amino-acid polypeptide reads, in one-letter code: Outer-membrane lipoprotein LolB (214 aa).

An N-terminal signal peptide occupies residues 1–25 (MNNLKRFTKSIFSCIALSGLLFLGG). C26 is lipidated: N-palmitoyl cysteine. C26 carries the S-diacylglycerol cysteine lipid modification.

It belongs to the LolB family. In terms of assembly, monomer.

It is found in the cell outer membrane. Functionally, plays a critical role in the incorporation of lipoproteins in the outer membrane after they are released by the LolA protein. The polypeptide is Outer-membrane lipoprotein LolB (Shewanella sp. (strain MR-7)).